The following is a 416-amino-acid chain: Gamma-glutamyl phosphate reductase (416 aa).

It belongs to the gamma-glutamyl phosphate reductase family.

It localises to the cytoplasm. The enzyme catalyses L-glutamate 5-semialdehyde + phosphate + NADP(+) = L-glutamyl 5-phosphate + NADPH + H(+). The protein operates within amino-acid biosynthesis; L-proline biosynthesis; L-glutamate 5-semialdehyde from L-glutamate: step 2/2. Functionally, catalyzes the NADPH-dependent reduction of L-glutamate 5-phosphate into L-glutamate 5-semialdehyde and phosphate. The product spontaneously undergoes cyclization to form 1-pyrroline-5-carboxylate. The polypeptide is Gamma-glutamyl phosphate reductase (Leptospira borgpetersenii serovar Hardjo-bovis (strain JB197)).